The following is a 137-amino-acid chain: Putative pre-16S rRNA nuclease (137 aa).

The protein belongs to the YqgF nuclease family.

The protein localises to the cytoplasm. Functionally, could be a nuclease involved in processing of the 5'-end of pre-16S rRNA. In Bacillus mycoides (strain KBAB4) (Bacillus weihenstephanensis), this protein is Putative pre-16S rRNA nuclease.